Reading from the N-terminus, the 54-residue chain is Large ribosomal subunit protein bL33A (54 aa).

The protein belongs to the bacterial ribosomal protein bL33 family.

The sequence is that of Large ribosomal subunit protein bL33A (rpmG1) from Mycobacterium bovis (strain ATCC BAA-935 / AF2122/97).